The sequence spans 38 residues: HADGIYTSDVASLTDYLKSKRFVESLSNYNKRQNDRRM.

The protein belongs to the glucagon family.

The protein resides in the secreted. This Hydrolagus colliei (Spotted ratfish) protein is Glucagon-like peptide.